Reading from the N-terminus, the 222-residue chain is Triosephosphate isomerase (222 aa).

Asn-9 to Lys-11 lines the substrate pocket. Residue His-93 is the Electrophile of the active site. The Proton acceptor role is filled by Glu-141. Residues Ile-146, Gly-181, and Ala-202–Ser-203 contribute to the substrate site.

The protein belongs to the triosephosphate isomerase family. As to quaternary structure, homotetramer; dimer of dimers.

It localises to the cytoplasm. The enzyme catalyses D-glyceraldehyde 3-phosphate = dihydroxyacetone phosphate. It participates in carbohydrate biosynthesis; gluconeogenesis. It functions in the pathway carbohydrate degradation; glycolysis; D-glyceraldehyde 3-phosphate from glycerone phosphate: step 1/1. In terms of biological role, involved in the gluconeogenesis. Catalyzes stereospecifically the conversion of dihydroxyacetone phosphate (DHAP) to D-glyceraldehyde-3-phosphate (G3P). This is Triosephosphate isomerase from Methanothermus fervidus (strain ATCC 43054 / DSM 2088 / JCM 10308 / V24 S).